Here is a 327-residue protein sequence, read N- to C-terminus: Surface protein P12p (327 aa).

2 6-Cys domains span residues 21-168 (NIEI…LKKN) and 169-304 (IIFG…FSNY). 6 disulfide bridges follow: cysteine 25/cysteine 60, cysteine 74/cysteine 144, cysteine 93/cysteine 142, cysteine 173/cysteine 208, cysteine 223/cysteine 285, and cysteine 234/cysteine 283. Residues asparagine 246, asparagine 264, and asparagine 298 are each glycosylated (N-linked (GlcNAc...) asparagine).

The protein localises to the cell surface. The protein resides in the cell membrane. This is Surface protein P12p (P12p) from Plasmodium berghei (strain Anka).